A 488-amino-acid chain; its full sequence is Glutamyl-tRNA(Gln) amidotransferase subunit A, mitochondrial (488 aa).

Catalysis depends on charge relay system residues Lys-62 and Ser-140. Ser-164 serves as the catalytic Acyl-ester intermediate. Residues 205–228 (GHDDNDPTSITPQTRERIQDRLSR) form a disordered region. A compositionally biased stretch (basic and acidic residues) spans 218 to 227 (TRERIQDRLS).

This sequence belongs to the amidase family. GatA subfamily. In terms of assembly, subunit of the heterotrimeric GatCAB amidotransferase (AdT) complex, composed of A, B and C subunits.

The protein resides in the mitochondrion. The catalysed reaction is L-glutamyl-tRNA(Gln) + L-glutamine + ATP + H2O = L-glutaminyl-tRNA(Gln) + L-glutamate + ADP + phosphate + H(+). In terms of biological role, allows the formation of correctly charged Gln-tRNA(Gln) through the transamidation of misacylated Glu-tRNA(Gln) in the mitochondria. The reaction takes place in the presence of glutamine and ATP through an activated gamma-phospho-Glu-tRNA(Gln). The chain is Glutamyl-tRNA(Gln) amidotransferase subunit A, mitochondrial from Tuber melanosporum (strain Mel28) (Perigord black truffle).